Here is a 1545-residue protein sequence, read N- to C-terminus: ATP-binding cassette sub-family C member 2 (1545 aa).

The Extracellular segment spans residues 1-27; the sequence is MLEKFCNSTFWNSSFLDSPEADLPLCF. N-linked (GlcNAc...) asparagine glycosylation is found at Asn7 and Asn12. Residues 28 to 48 traverse the membrane as a helical segment; sequence EQTVLVWIPLGYLWLLAPWQL. Residues 49-68 are Cytoplasmic-facing; the sequence is LHVYKSRTKRSSTTKLYLAK. Residues 69–89 form a helical membrane-spanning segment; it reads QVFVGFLLILAAIELALVLTE. At 90–93 the chain is on the extracellular side; that stretch reads DSGQ. Residues 94–114 form a helical membrane-spanning segment; that stretch reads ATVPAVRYTNPSLYLGTWLLV. Topologically, residues 115–126 are cytoplasmic; the sequence is LLIQYSRQWCVQ. Residues 127–147 traverse the membrane as a helical segment; it reads KNSWFLSLFWILSILCGTFQF. The Extracellular portion of the chain corresponds to 148 to 165; the sequence is QTLIRTLLQGDNSNLAYS. A helical membrane pass occupies residues 166–186; the sequence is CLFFISYGFQILILIFSAFSE. The Cytoplasmic segment spans residues 187–313; sequence NNESSNNPSS…DVPKSWLMKA (127 aa). A disordered region spans residues 253 to 284; that stretch reads ARRALQRRQEKSSQQNSGARLPGLNKNQSQSQ. Phosphoserine is present on residues Ser281 and Ser283. A helical transmembrane segment spans residues 314 to 334; it reads LFKTFYMVLLKSFLLKLVNDI. The ABC transmembrane type-1 1 domain occupies 322-605; sequence LLKSFLLKLV…LPMMISSMLQ (284 aa). Topologically, residues 335–360 are extracellular; it reads FTFVSPQLLKLLISFASDRDTYLWIG. A helical membrane pass occupies residues 361–381; that stretch reads YLCAILLFTAALIQSFCLQCY. The Cytoplasmic portion of the chain corresponds to 382–437; it reads FQLCFKLGVKVRTAIMASVYKKALTLSNLARKEYTVGETVNLMSVDAQKLMDVTNF. Residues 438–458 form a helical membrane-spanning segment; sequence MHMLWSSVLQIVLSIFFLWRE. Over 459–461 the chain is Extracellular; it reads LGP. The chain crosses the membrane as a helical span at residues 462-482; the sequence is SVLAGVGVMVLVIPINAILST. The Cytoplasmic portion of the chain corresponds to 483 to 544; it reads KSKTIQVKNM…NLLAFSQLQC (62 aa). A helical transmembrane segment spans residues 545 to 565; that stretch reads VVIFVFQLTPVLVSVVTFSVY. Residues 566 to 587 are Extracellular-facing; it reads VLVDSNNILDAQKAFTSITLFN. Residues 588–608 form a helical membrane-spanning segment; the sequence is ILRFPLSMLPMMISSMLQASV. Over 609–971 the chain is Cytoplasmic; that stretch reads STERLEKYLG…VKFSIYLEYL (363 aa). The ABC transporter 1 domain occupies 637–861; it reads MQFSEASFTW…KGEFAKNLKT (225 aa). 671-678 is a binding site for ATP; the sequence is GPVGSGKS. Phosphoserine is present on residues Ser878, Ser926, Ser930, and Ser938. Residues 972-992 traverse the membrane as a helical segment; it reads QAIGLFSIFFIILAFVMNSVA. The region spanning 979 to 1264 is the ABC transmembrane type-1 2 domain; sequence IFFIILAFVM…LVRMTSEIET (286 aa). At 993-1033 the chain is on the extracellular side; the sequence is FIGSNLWLSAWTSDSKIFNSTDYPASQRDMRVGVYGALGLA. Residue Asn1011 is glycosylated (N-linked (GlcNAc...) asparagine). A helical transmembrane segment spans residues 1034-1054; that stretch reads QGIFVFIAHFWSAFGFVHASN. The Cytoplasmic portion of the chain corresponds to 1055-1097; it reads ILHKQLLNNILRAPMRFFDTTPTGRIVNRFAGDISTVDDTLPQ. The chain crosses the membrane as a helical span at residues 1098–1118; sequence SLRSWITCFLGIISTLVMICM. Ala1119 is a topological domain (extracellular). The helical transmembrane segment at 1120 to 1140 threads the bilayer; it reads TPVFTIIVIPLGIIYVSVQMF. The Cytoplasmic portion of the chain corresponds to 1141–1211; sequence YVSTSRQLRR…TSNRWLAIRL (71 aa). A helical membrane pass occupies residues 1212-1232; the sequence is ELVGNLTVFFSALMMVIYRDT. At 1233–1234 the chain is on the extracellular side; that stretch reads LS. The chain crosses the membrane as a helical span at residues 1235–1255; it reads GDTVGFVLSNALNITQTLNWL. Residues 1256–1545 are Cytoplasmic-facing; that stretch reads VRMTSEIETN…GIENVNSTKF (290 aa). The region spanning 1300-1534 is the ABC transporter 2 domain; it reads IQFNNYQVRY…PGPFYFMAKE (235 aa). 1334–1341 is an ATP binding site; sequence GRTGAGKS. Ser1438 is modified (phosphoserine).

The protein belongs to the ABC transporter superfamily. ABCC family. Conjugate transporter (TC 3.A.1.208) subfamily. In terms of tissue distribution, expressed by polarized cells in liver, kidney and intestine. The highest expression is found in liver. Expressed in small intestine.

The protein localises to the apical cell membrane. The catalysed reaction is ATP + H2O + xenobioticSide 1 = ADP + phosphate + xenobioticSide 2.. The enzyme catalyses an S-substituted glutathione(in) + ATP + H2O = an S-substituted glutathione(out) + ADP + phosphate + H(+). It carries out the reaction taurolithocholate 3-sulfate(in) + ATP + H2O = taurolithocholate 3-sulfate(out) + ADP + phosphate + H(+). It catalyses the reaction leukotriene C4(in) + ATP + H2O = leukotriene C4(out) + ADP + phosphate + H(+). The catalysed reaction is 17beta-estradiol 17-O-(beta-D-glucuronate)(in) + ATP + H2O = 17beta-estradiol 17-O-(beta-D-glucuronate)(out) + ADP + phosphate + H(+). The enzyme catalyses (4Z,15Z)-bilirubin IXalpha C8-beta-D-glucuronoside(in) + ATP + H2O = (4Z,15Z)-bilirubin IXalpha C8-beta-D-glucuronoside(out) + ADP + phosphate + H(+). It carries out the reaction (4Z,15Z)-bilirubin IXalpha C8,C12-beta-D-bisglucuronoside(in) + ATP + H2O = (4Z,15Z)-bilirubin IXalpha C8,C12-beta-D-bisglucuronoside(out) + ADP + phosphate + H(+). Its function is as follows. ATP-dependent transporter of the ATP-binding cassette (ABC) family that binds and hydrolyzes ATP to enable active transport of various substrates including many drugs, toxicants and endogenous compound across cell membranes. Transports a wide variety of conjugated organic anions such as sulfate-, glucuronide- and glutathione (GSH)-conjugates of endo- and xenobiotics substrates. Mediates hepatobiliary excretion of mono- and bis-glucuronidated bilirubin molecules and therefore play an important role in bilirubin detoxification. Also mediates hepatobiliary excretion of others glucuronide conjugates such as 17beta-estradiol 17-glucosiduronic acid and leukotriene C4. Transports sulfated bile salt such as taurolithocholate sulfate. Transports various anticancer drugs, such as anthracycline, vinca alkaloid and methotrexate and HIV-drugs such as protease inhibitors. Confers resistance to several anti-cancer drugs including cisplatin, doxorubicin, epirubicin, methotrexate, etoposide and vincristine. In Homo sapiens (Human), this protein is ATP-binding cassette sub-family C member 2.